A 479-amino-acid chain; its full sequence is Transcription factor CP2-like protein 1 (479 aa).

In terms of domain architecture, Grh/CP2 DB spans Arg-43–Asn-280. Disordered stretches follow at residues Lys-219–Tyr-245 and Pro-271–Gly-301. A compositionally biased stretch (basic and acidic residues) spans Lys-221 to Tyr-245. Residues Pro-261–Arg-365 form an SAM2-like domain region. A compositionally biased stretch (polar residues) spans Pro-271–Ser-281.

This sequence belongs to the grh/CP2 family. CP2 subfamily. In terms of assembly, forms homohexamers via its SAM-like domain. Interacts with MTA1; which is indispensable for TFCP2l1-mediated self-renewal-promoting effect and endoderm-inhibiting action. In terms of tissue distribution, highly expressed in placental JEG-3 cells and very low levels of expression in non-steroidogenic cells. No expression was seen in adrenal NCI-H295A cells or in adrenal tissue.

The protein resides in the nucleus. Functionally, transcription factor that facilitates establishment and maintenance of pluripotency in embryonic stem cells (ESCs). With KLF2, acts as the major effector of self-renewal that mediates induction of pluripotency downstream of LIF/STAT3 and Wnt/beta-catenin signaling. Required for normal duct development in the salivary gland and kidney. Coordinates the development of the kidney collecting ducts intercalated (IC) and principal (PC) cells, which regulate acid-base and salt-water homeostasis, respectively. Regulates the expression of IC genes including subunits B1 and D2 of the V-ATPase complex, OXGR1, CA12, SLC4A1, AQP6 and IC-specific transcription factor FOXI1. Also regulates the expression of JAG1 and subsequent notch signaling in the collecting duct. JAG1 initiates notch signaling in PCs but inhibits notch signaling in ICs. Acts as a transcriptional suppressor that may suppress UBP1-mediated transcriptional activation. Modulates the placental expression of CYP11A1. This Homo sapiens (Human) protein is Transcription factor CP2-like protein 1 (TFCP2L1).